Consider the following 287-residue polypeptide: MGRCTIADVAMLIRWRVSLMVAGATFFGAMLAVPHVTITHLLASLATFLLAGGCSAINQVQEADLDAVIPRTASRPIPCGRIGHMYGSLMGLALVTVGWMVLCLAGGLTSLLVGIGIVAVYNGLYTPLKRRTSFALLVGAAAGAMPPVVGWLAVGGHPASPMLVVVYTLYLLWQIPHFWLHAARDREAYRKARLPLPLLSLPHERYARLLKVWFHAYAVAVLMVPAFPLLEWVGMRIMVTLCGIALLFAAMLAVRKRRVALHIADAVLCAVMVVLLIDRLAIPVSLF.

7 helical membrane-spanning segments follow: residues 19 to 39 (LMVA…VTIT), 100 to 120 (MVLC…IVAV), 134 to 154 (FALL…WLAV), 162 to 182 (MLVV…WLHA), 212 to 232 (VWFH…LLEW), 233 to 253 (VGMR…AMLA), and 267 to 287 (VLCA…VSLF).

Belongs to the UbiA prenyltransferase family. Protoheme IX farnesyltransferase subfamily.

It localises to the cell inner membrane. It catalyses the reaction heme b + (2E,6E)-farnesyl diphosphate + H2O = Fe(II)-heme o + diphosphate. Its pathway is porphyrin-containing compound metabolism; heme O biosynthesis; heme O from protoheme: step 1/1. In terms of biological role, converts heme B (protoheme IX) to heme O by substitution of the vinyl group on carbon 2 of heme B porphyrin ring with a hydroxyethyl farnesyl side group. The polypeptide is Protoheme IX farnesyltransferase (Nitratidesulfovibrio vulgaris (strain ATCC 29579 / DSM 644 / CCUG 34227 / NCIMB 8303 / VKM B-1760 / Hildenborough) (Desulfovibrio vulgaris)).